Reading from the N-terminus, the 560-residue chain is Nibrin homolog (560 aa).

The FHA domain occupies 25–87 (YKVGRKDCDV…YGTFFNKVQG (63 aa)). The 76-residue stretch at 115–190 (TFRLSFVPIV…KQIVLGDWFK (76 aa)) folds into the BRCT domain. Positions 511–518 (YKRGTVID) match the Nuclear localization signal motif.

It belongs to the Nibrin family. Component of the MRN complex composed of two heterodimers RAD50 and MRE11 associated with a single NBS1.

It localises to the nucleus. The protein localises to the chromosome. Functionally, component of the MRN complex, which plays a central role in double-strand break (DSB) repair, DNA recombination, maintenance of telomere integrity and meiosis. The MRN complex is involved in the repair of DNA double-strand breaks (DSBs) via homologous recombination (HR), an error-free mechanism which primarily occurs during S and G2 phases. The complex (1) mediates the end resection of damaged DNA, which generates proper single-stranded DNA, a key initial steps in HR, and is (2) required for the recruitment of other repair factors and efficient activation of ATM and ATR upon DNA damage. The MRN complex possesses single-strand endonuclease activity and double-strand-specific 3'-5' exonuclease activity, which are provided by MRE11, to initiate end resection, which is required for single-strand invasion and recombination. Within the MRN complex, NBS1 acts as a protein-protein adapter, which specifically recognizes and binds phosphorylated proteins, promoting their recruitment to DNA damage sites. Recruits MRE11 and RAD50 components of the MRN complex to DSBs in response to DNA damage. This Oryza sativa subsp. indica (Rice) protein is Nibrin homolog.